We begin with the raw amino-acid sequence, 192 residues long: uncharacterized protein (192 aa).

Residues 29–160 (HRQAAVLIPI…PLDIYRRGDS (132 aa)) enclose the Nudix hydrolase domain. A Nudix box motif is present at residues 67 to 89 (GAVDDTDASVIAAALREAEEEVA). Mg(2+)-binding residues include Glu83 and Glu87.

This sequence belongs to the Nudix hydrolase family. PCD1 subfamily. Mn(2+) is required as a cofactor. It depends on Mg(2+) as a cofactor.

Probably mediates the hydrolysis of some nucleoside diphosphate derivatives. This is an uncharacterized protein from Shigella boydii serotype 4 (strain Sb227).